Consider the following 332-residue polypeptide: Biotin synthase (332 aa).

One can recognise a Radical SAM core domain in the interval 53-282 (YFGKKVKLNM…TKEIRISGGR (230 aa)). Cysteine 71, cysteine 75, and cysteine 78 together coordinate [4Fe-4S] cluster. [2Fe-2S] cluster is bound by residues cysteine 115, cysteine 147, cysteine 207, and arginine 277.

This sequence belongs to the radical SAM superfamily. Biotin synthase family. In terms of assembly, homodimer. It depends on [4Fe-4S] cluster as a cofactor. The cofactor is [2Fe-2S] cluster.

It carries out the reaction (4R,5S)-dethiobiotin + (sulfur carrier)-SH + 2 reduced [2Fe-2S]-[ferredoxin] + 2 S-adenosyl-L-methionine = (sulfur carrier)-H + biotin + 2 5'-deoxyadenosine + 2 L-methionine + 2 oxidized [2Fe-2S]-[ferredoxin]. Its pathway is cofactor biosynthesis; biotin biosynthesis; biotin from 7,8-diaminononanoate: step 2/2. In terms of biological role, catalyzes the conversion of dethiobiotin (DTB) to biotin by the insertion of a sulfur atom into dethiobiotin via a radical-based mechanism. The polypeptide is Biotin synthase (Bacillus anthracis).